We begin with the raw amino-acid sequence, 745 residues long: Kinesin-like protein KIN-14M (745 aa).

Residues 1 to 31 (MVGEMTNNGRIRPSFPVKDLTSNEGSEYGGP) form a disordered region. A globular region spans residues 1 to 35 (MVGEMTNNGRIRPSFPVKDLTSNEGSEYGGPVEFT). Microtubule-binding stretches follow at residues 65 to 77 (YVKRLRLCIRWFQ) and 198 to 745 (SLQL…LSLG). Coiled coils occupy residues 76–223 (FQEL…GEKE) and 259–389 (KDEL…GNIR). Residues 387-724 (NIRVFCRVRP…LRFAARVNAC (338 aa)) form the Kinesin motor domain. 472–479 (GQTGSGKT) contacts ATP.

The protein belongs to the TRAFAC class myosin-kinesin ATPase superfamily. Kinesin family. KIN-14 subfamily. As to quaternary structure, bind to microtubules in an ATP-insensitive manner (in vitro). Homodimer and heterodimer with KIN14N/KATC (in vitro).

The protein localises to the cytoplasm. Its subcellular location is the cytoskeleton. The protein is Kinesin-like protein KIN-14M of Arabidopsis thaliana (Mouse-ear cress).